Reading from the N-terminus, the 208-residue chain is ATP-dependent Clp protease proteolytic subunit (208 aa).

Serine 105 serves as the catalytic Nucleophile. Histidine 130 is a catalytic residue.

Belongs to the peptidase S14 family. In terms of assembly, fourteen ClpP subunits assemble into 2 heptameric rings which stack back to back to give a disk-like structure with a central cavity, resembling the structure of eukaryotic proteasomes.

Its subcellular location is the cytoplasm. The catalysed reaction is Hydrolysis of proteins to small peptides in the presence of ATP and magnesium. alpha-casein is the usual test substrate. In the absence of ATP, only oligopeptides shorter than five residues are hydrolyzed (such as succinyl-Leu-Tyr-|-NHMec, and Leu-Tyr-Leu-|-Tyr-Trp, in which cleavage of the -Tyr-|-Leu- and -Tyr-|-Trp bonds also occurs).. Cleaves peptides in various proteins in a process that requires ATP hydrolysis. Has a chymotrypsin-like activity. Plays a major role in the degradation of misfolded proteins. In Xanthomonas campestris pv. campestris (strain 8004), this protein is ATP-dependent Clp protease proteolytic subunit.